The sequence spans 172 residues: Small ribosomal subunit protein uS13 (172 aa).

The disordered stretch occupies residues 131 to 172 (GQRTRTTGRTGVTVGVRRSKAAQAAQQQQKAQASSGGEKKQG). The segment covering 134–163 (TRTTGRTGVTVGVRRSKAAQAAQQQQKAQA) has biased composition (low complexity).

Belongs to the universal ribosomal protein uS13 family. Part of the 30S ribosomal subunit. Forms a loose heterodimer with protein S19. Forms two bridges to the 50S subunit in the 70S ribosome.

Its function is as follows. Located at the top of the head of the 30S subunit, it contacts several helices of the 16S rRNA. In the 70S ribosome it contacts the 23S rRNA (bridge B1a) and protein L5 of the 50S subunit (bridge B1b), connecting the 2 subunits; these bridges are implicated in subunit movement. This Sulfurisphaera tokodaii (strain DSM 16993 / JCM 10545 / NBRC 100140 / 7) (Sulfolobus tokodaii) protein is Small ribosomal subunit protein uS13.